An 89-amino-acid chain; its full sequence is Small ribosomal subunit protein uS15 (89 aa).

This sequence belongs to the universal ribosomal protein uS15 family. Part of the 30S ribosomal subunit. Forms a bridge to the 50S subunit in the 70S ribosome, contacting the 23S rRNA.

In terms of biological role, one of the primary rRNA binding proteins, it binds directly to 16S rRNA where it helps nucleate assembly of the platform of the 30S subunit by binding and bridging several RNA helices of the 16S rRNA. Its function is as follows. Forms an intersubunit bridge (bridge B4) with the 23S rRNA of the 50S subunit in the ribosome. In Nostoc sp. (strain PCC 7120 / SAG 25.82 / UTEX 2576), this protein is Small ribosomal subunit protein uS15.